Consider the following 88-residue polypeptide: Arminin 7965 (88 aa).

A signal peptide spans 1–18 (MKTVFAILFLTFIAFTYA). A propeptide spanning residues 19 to 57 (KSYEDVKEEIKNEVEREIFEDLEEESDVLDSNVRELNDA) is cleaved from the precursor. At alanine 85 the chain carries Alanine amide.

It belongs to the arminin family. In terms of tissue distribution, expressed in entodermal epithelium along the body column.

The protein localises to the secreted. The protein resides in the target cell membrane. In terms of biological role, antimicrobial peptide with a broad-spectrum antimicrobial activity. Keeps its antibacterial activity under a wide range of salt concentrations that mimic physiological conditions of human blood, which is surprising, since Hydra is an obligate freshwater animal with nearly no salt tolerance. Does not affect red blood cells. The polypeptide is Arminin 7965 (Hydra vulgaris (Hydra)).